The sequence spans 201 residues: Peptide deformylase (201 aa).

The segment covering 1–17 (MANNFSQLARKSKTNSP) has biased composition (polar residues). The disordered stretch occupies residues 1-24 (MANNFSQLARKSKTNSPIEKVSKE). C121 and H163 together coordinate Fe cation. E164 is an active-site residue. H167 contributes to the Fe cation binding site.

This sequence belongs to the polypeptide deformylase family. The cofactor is Fe(2+).

The enzyme catalyses N-terminal N-formyl-L-methionyl-[peptide] + H2O = N-terminal L-methionyl-[peptide] + formate. Removes the formyl group from the N-terminal Met of newly synthesized proteins. Requires at least a dipeptide for an efficient rate of reaction. N-terminal L-methionine is a prerequisite for activity but the enzyme has broad specificity at other positions. The chain is Peptide deformylase from Prochlorococcus marinus subsp. pastoris (strain CCMP1986 / NIES-2087 / MED4).